Here is a 145-residue protein sequence, read N- to C-terminus: Cytochrome c-type biogenesis protein CcmE (145 aa).

Topologically, residues 1 to 7 (MKAKHQR) are cytoplasmic. A helical; Signal-anchor for type II membrane protein transmembrane segment spans residues 8–28 (LILAVAALCGVAGAGVLAASA). The Periplasmic portion of the chain corresponds to 29–145 (LRDEAAYFRT…PKNMKAAVEG (117 aa)). The heme site is built by H123 and Y127.

This sequence belongs to the CcmE/CycJ family.

It localises to the cell inner membrane. In terms of biological role, heme chaperone required for the biogenesis of c-type cytochromes. Transiently binds heme delivered by CcmC and transfers the heme to apo-cytochromes in a process facilitated by CcmF and CcmH. The chain is Cytochrome c-type biogenesis protein CcmE from Sphingopyxis alaskensis (strain DSM 13593 / LMG 18877 / RB2256) (Sphingomonas alaskensis).